An 895-amino-acid polypeptide reads, in one-letter code: Zinc finger protein 574 (895 aa).

C2H2-type zinc fingers lie at residues 16–38, 76–98, and 126–148; these read YVCSECNQLYGSLEEVLMHQNSH, YQCLECGQLLMSPSQLLEHQELH, and YECVDCKALFASQELWLNHRQTH. Ser164 is subject to Phosphoserine. The segment at 214 to 236 adopts a C2H2-type 4 zinc-finger fold; sequence YKCSECSQLFQLPADFLEHQATH. Residues 239 to 301 form a disordered region; it reads APVPESQEPA…RARRNNSGEA (63 aa). Over residues 247-257 the composition is skewed to polar residues; sequence PALQQEVQASS. The segment covering 274-287 has biased composition (basic and acidic residues); it reads HSYELRNGEAIGRD. Residue Ser298 is modified to Phosphoserine. 4 consecutive C2H2-type zinc fingers follow at residues 309-331, 336-358, 364-386, and 392-413; these read LFCSACDQLFLSPHQLQQHLRSH, FKCPLCSRVFPSPSSLDQHLGDH, FLCVDCGLAFGTEALLLAHRRAH, and HSCPCGKTFVNLTKFLYHRRTH. The disordered stretch occupies residues 434–460; sequence FPEPAPAETGEPEAPEPPVSEETSAGP. 6 consecutive C2H2-type zinc fingers follow at residues 466-489, 495-517, 523-545, 551-573, 579-601, and 607-630; these read YRCLLCSREFGKALQLTRHQRFVH, HKCSICGKMFKKKSHVRNHLRTH, FPCPDCSKPFNSPANLARHRLTH, YRCGDCGKAFTQSSTLRQHRLVH, YRCQECGVRFHRPYRLLMHRYHH, and YKCRECPRSFLLRRLLEVHQLVVH. The segment at 636–659 adopts a C2H2-type 15; degenerate zinc-finger fold; the sequence is HRCPSCGAAFPSSLRLREHRCAAA. The segment at 667-689 adopts a C2H2-type 16 zinc-finger fold; that stretch reads FECGTCGKKVGSAARLQAHEAAH. A disordered region spans residues 687-732; the sequence is AAHAAAGPGEVLAKEPPAPRAPRATRAPVASPAALGGTATASPAPA. Residues 707-731 show a composition bias toward low complexity; the sequence is APRATRAPVASPAALGGTATASPAP. Residue Ser717 is modified to Phosphoserine. Residue Thr724 is modified to Phosphothreonine. Residue Ser728 is modified to Phosphoserine. C2H2-type zinc fingers lie at residues 737-759, 765-787, 793-815, and 821-843; these read LECSECKKLFSTETSLQVHRRIH, YPCPDCGKAFRQSTHLKDHRRLH, FACEVCGKAFAISMRLAEHRRIH, and YSCPDCGKSYRSFSNLWKHRKTH. An Asymmetric dimethylarginine modification is found at Arg831.

This sequence belongs to the krueppel C2H2-type zinc-finger protein family.

The protein resides in the nucleus. Its function is as follows. May be involved in transcriptional regulation. The protein is Zinc finger protein 574 (ZNF574) of Pongo abelii (Sumatran orangutan).